The following is a 490-amino-acid chain: Probable cytosol aminopeptidase (490 aa).

The Mn(2+) site is built by K256 and D261. K268 is an active-site residue. Residues D280, D340, and E342 each coordinate Mn(2+). Residue R344 is part of the active site.

This sequence belongs to the peptidase M17 family. Requires Mn(2+) as cofactor.

The protein localises to the cytoplasm. The catalysed reaction is Release of an N-terminal amino acid, Xaa-|-Yaa-, in which Xaa is preferably Leu, but may be other amino acids including Pro although not Arg or Lys, and Yaa may be Pro. Amino acid amides and methyl esters are also readily hydrolyzed, but rates on arylamides are exceedingly low.. The enzyme catalyses Release of an N-terminal amino acid, preferentially leucine, but not glutamic or aspartic acids.. Its function is as follows. Presumably involved in the processing and regular turnover of intracellular proteins. Catalyzes the removal of unsubstituted N-terminal amino acids from various peptides. This Synechococcus sp. (strain CC9902) protein is Probable cytosol aminopeptidase.